The following is a 578-amino-acid chain: Isocitrate dehydrogenase kinase/phosphatase (578 aa).

ATP is bound by residues 315 to 321 (APGIRGM) and Lys-336. The active site involves Asp-371.

The protein belongs to the AceK family.

Its subcellular location is the cytoplasm. The enzyme catalyses L-seryl-[isocitrate dehydrogenase] + ATP = O-phospho-L-seryl-[isocitrate dehydrogenase] + ADP + H(+). Its function is as follows. Bifunctional enzyme which can phosphorylate or dephosphorylate isocitrate dehydrogenase (IDH) on a specific serine residue. This is a regulatory mechanism which enables bacteria to bypass the Krebs cycle via the glyoxylate shunt in response to the source of carbon. When bacteria are grown on glucose, IDH is fully active and unphosphorylated, but when grown on acetate or ethanol, the activity of IDH declines drastically concomitant with its phosphorylation. The chain is Isocitrate dehydrogenase kinase/phosphatase from Escherichia coli O17:K52:H18 (strain UMN026 / ExPEC).